We begin with the raw amino-acid sequence, 379 residues long: 3-dehydroquinate synthase (379 aa).

NAD(+) contacts are provided by residues 67–72, 101–105, 125–126, K138, and K147; these read PGEKNK, GIVLD, and TT. Zn(2+)-binding residues include E180, H242, and H258.

The protein belongs to the sugar phosphate cyclases superfamily. Dehydroquinate synthase family. Requires NAD(+) as cofactor. Co(2+) serves as cofactor. Zn(2+) is required as a cofactor.

The protein localises to the cytoplasm. The catalysed reaction is 7-phospho-2-dehydro-3-deoxy-D-arabino-heptonate = 3-dehydroquinate + phosphate. The protein operates within metabolic intermediate biosynthesis; chorismate biosynthesis; chorismate from D-erythrose 4-phosphate and phosphoenolpyruvate: step 2/7. Catalyzes the conversion of 3-deoxy-D-arabino-heptulosonate 7-phosphate (DAHP) to dehydroquinate (DHQ). In Chlamydia felis (strain Fe/C-56) (Chlamydophila felis), this protein is 3-dehydroquinate synthase.